The following is a 502-amino-acid chain: Probable glycine dehydrogenase (decarboxylating) subunit 2 (502 aa).

Residue Lys273 is modified to N6-(pyridoxal phosphate)lysine.

Belongs to the GcvP family. C-terminal subunit subfamily. As to quaternary structure, the glycine cleavage system is composed of four proteins: P, T, L and H. In this organism, the P 'protein' is a heterodimer of two subunits. Requires pyridoxal 5'-phosphate as cofactor.

The enzyme catalyses N(6)-[(R)-lipoyl]-L-lysyl-[glycine-cleavage complex H protein] + glycine + H(+) = N(6)-[(R)-S(8)-aminomethyldihydrolipoyl]-L-lysyl-[glycine-cleavage complex H protein] + CO2. In terms of biological role, the glycine cleavage system catalyzes the degradation of glycine. The P protein binds the alpha-amino group of glycine through its pyridoxal phosphate cofactor; CO(2) is released and the remaining methylamine moiety is then transferred to the lipoamide cofactor of the H protein. In Pyrococcus horikoshii (strain ATCC 700860 / DSM 12428 / JCM 9974 / NBRC 100139 / OT-3), this protein is Probable glycine dehydrogenase (decarboxylating) subunit 2.